The chain runs to 297 residues: Phospholipid scramblase 2 (297 aa).

The tract at residues M1–P72 is proline-rich domain (PRD). The Cytoplasmic portion of the chain corresponds to M1–K276. A Phosphothreonine; by PKC modification is found at T149. S-palmitoyl cysteine attachment occurs at residues C172, C173, C174, C176, and C177. The chain crosses the membrane as a helical span at residues M277–F293. Topologically, residues E294–R297 are extracellular.

The protein belongs to the phospholipid scramblase family. The cofactor is Ca(2+). In terms of tissue distribution, expression of isoform 1 seems restricted to testis.

The protein resides in the membrane. It localises to the nucleus. It catalyses the reaction a 1,2-diacyl-sn-glycero-3-phosphocholine(in) = a 1,2-diacyl-sn-glycero-3-phosphocholine(out). Its function is as follows. May catalyze calcium-induced ATP-independent rapid bidirectional and non-specific movement of phospholipids (lipid scrambling or lipid flip-flop) between the inner and outer leaflet of the plasma membrane. Functionally, has no phospholipid scramblase activity, due to the lack of a N-terminal proline-rich domain. The chain is Phospholipid scramblase 2 from Homo sapiens (Human).